Reading from the N-terminus, the 658-residue chain is Glycogen debranching enzyme (658 aa).

Residue Asp-336 is the Nucleophile of the active site. Catalysis depends on Glu-371, which acts as the Proton donor. The interval 459–484 (EANGEENRDGTNSNYSDNHGKEGLGG) is disordered.

This sequence belongs to the glycosyl hydrolase 13 family.

The enzyme catalyses Hydrolysis of (1-&gt;6)-alpha-D-glucosidic linkages to branches with degrees of polymerization of three or four glucose residues in limit dextrin.. It functions in the pathway glycan degradation; glycogen degradation. Its function is as follows. Removes maltotriose and maltotetraose chains that are attached by 1,6-alpha-linkage to the limit dextrin main chain, generating a debranched limit dextrin. This is Glycogen debranching enzyme from Salmonella enteritidis PT4 (strain P125109).